An 89-amino-acid polypeptide reads, in one-letter code: Small ribosomal subunit protein uS15 (89 aa).

This sequence belongs to the universal ribosomal protein uS15 family. As to quaternary structure, part of the 30S ribosomal subunit. Forms a bridge to the 50S subunit in the 70S ribosome, contacting the 23S rRNA.

Functionally, one of the primary rRNA binding proteins, it binds directly to 16S rRNA where it helps nucleate assembly of the platform of the 30S subunit by binding and bridging several RNA helices of the 16S rRNA. Forms an intersubunit bridge (bridge B4) with the 23S rRNA of the 50S subunit in the ribosome. The protein is Small ribosomal subunit protein uS15 of Chromohalobacter salexigens (strain ATCC BAA-138 / DSM 3043 / CIP 106854 / NCIMB 13768 / 1H11).